Here is a 199-residue protein sequence, read N- to C-terminus: ATP-dependent Clp protease proteolytic subunit (199 aa).

S97 (nucleophile) is an active-site residue. H122 is a catalytic residue.

The protein belongs to the peptidase S14 family. As to quaternary structure, fourteen ClpP subunits assemble into 2 heptameric rings which stack back to back to give a disk-like structure with a central cavity, resembling the structure of eukaryotic proteasomes.

It is found in the cytoplasm. It catalyses the reaction Hydrolysis of proteins to small peptides in the presence of ATP and magnesium. alpha-casein is the usual test substrate. In the absence of ATP, only oligopeptides shorter than five residues are hydrolyzed (such as succinyl-Leu-Tyr-|-NHMec, and Leu-Tyr-Leu-|-Tyr-Trp, in which cleavage of the -Tyr-|-Leu- and -Tyr-|-Trp bonds also occurs).. Functionally, cleaves peptides in various proteins in a process that requires ATP hydrolysis. Has a chymotrypsin-like activity. Plays a major role in the degradation of misfolded proteins. This is ATP-dependent Clp protease proteolytic subunit from Geobacter metallireducens (strain ATCC 53774 / DSM 7210 / GS-15).